The following is a 561-amino-acid chain: Dihydroxy-acid dehydratase (561 aa).

Cys51 contacts [2Fe-2S] cluster. Asp83 provides a ligand contact to Mg(2+). Cys124 contacts [2Fe-2S] cluster. Positions 125 and 126 each coordinate Mg(2+). Lys126 carries the post-translational modification N6-carboxylysine. Residue Cys196 participates in [2Fe-2S] cluster binding. Position 448 (Glu448) interacts with Mg(2+). Residue Ser474 is the Proton acceptor of the active site.

It belongs to the IlvD/Edd family. Homodimer. It depends on [2Fe-2S] cluster as a cofactor. The cofactor is Mg(2+).

It catalyses the reaction (2R)-2,3-dihydroxy-3-methylbutanoate = 3-methyl-2-oxobutanoate + H2O. The catalysed reaction is (2R,3R)-2,3-dihydroxy-3-methylpentanoate = (S)-3-methyl-2-oxopentanoate + H2O. The protein operates within amino-acid biosynthesis; L-isoleucine biosynthesis; L-isoleucine from 2-oxobutanoate: step 3/4. Its pathway is amino-acid biosynthesis; L-valine biosynthesis; L-valine from pyruvate: step 3/4. In terms of biological role, functions in the biosynthesis of branched-chain amino acids. Catalyzes the dehydration of (2R,3R)-2,3-dihydroxy-3-methylpentanoate (2,3-dihydroxy-3-methylvalerate) into 2-oxo-3-methylpentanoate (2-oxo-3-methylvalerate) and of (2R)-2,3-dihydroxy-3-methylbutanoate (2,3-dihydroxyisovalerate) into 2-oxo-3-methylbutanoate (2-oxoisovalerate), the penultimate precursor to L-isoleucine and L-valine, respectively. The polypeptide is Dihydroxy-acid dehydratase (Pyrobaculum neutrophilum (strain DSM 2338 / JCM 9278 / NBRC 100436 / V24Sta) (Thermoproteus neutrophilus)).